The sequence spans 197 residues: Outer-membrane lipoprotein LolB (197 aa).

An N-terminal signal peptide occupies residues 1-20; it reads MNRSRRLALFCLGAPLLLQA. A lipid anchor (N-palmitoyl cysteine) is attached at C21. A lipid anchor (S-diacylglycerol cysteine) is attached at C21.

The protein belongs to the LolB family. As to quaternary structure, monomer.

The protein resides in the cell outer membrane. In terms of biological role, plays a critical role in the incorporation of lipoproteins in the outer membrane after they are released by the LolA protein. In Cupriavidus necator (strain ATCC 17699 / DSM 428 / KCTC 22496 / NCIMB 10442 / H16 / Stanier 337) (Ralstonia eutropha), this protein is Outer-membrane lipoprotein LolB.